The sequence spans 205 residues: LexA repressor (205 aa).

The segment at residues 28-48 (RAEIAASLGFRSPNAAEEHLK) is a DNA-binding region (H-T-H motif). Residues Ser-122 and Lys-159 each act as for autocatalytic cleavage activity in the active site.

The protein belongs to the peptidase S24 family. As to quaternary structure, homodimer.

It carries out the reaction Hydrolysis of Ala-|-Gly bond in repressor LexA.. Functionally, represses a number of genes involved in the response to DNA damage (SOS response), including recA and lexA. Binds to the 16 bp palindromic sequence 5'-CTGTATATATATACAG-3'. In the presence of single-stranded DNA, RecA interacts with LexA causing an autocatalytic cleavage which disrupts the DNA-binding part of LexA, leading to derepression of the SOS regulon and eventually DNA repair. The chain is LexA repressor from Providencia rettgeri.